The sequence spans 679 residues: Enzymatic polyprotein (679 aa).

Residues 40 to 130 are protease; the sequence is LHCFVDTGAS…LYEPFIQFTD (91 aa). D45 is an active-site residue. The 181-residue stretch at 272–452 folds into the Reverse transcriptase domain; it reads LKVIKPSKSP…KKINFLGLEI (181 aa).

It belongs to the caulimoviridae enzymatic polyprotein family.

The enzyme catalyses DNA(n) + a 2'-deoxyribonucleoside 5'-triphosphate = DNA(n+1) + diphosphate. Functionally, encodes for at least two polypeptides: protease (PR) and reverse transcriptase (RT). The protease processes the polyprotein in cis. Reverse transcriptase is multifunctional enzyme that converts the viral RNA genome into dsDNA in viral cytoplasmic capsids. This enzyme displays a DNA polymerase activity that can copy either DNA or RNA templates, and a ribonuclease H (RNase H) activity that cleaves the RNA strand of RNA-DNA heteroduplexes in a partially processive 3'- to 5'-endonucleasic mode. Neo-synthesized pregenomic RNA (pgRNA) are encapsidated, and reverse-transcribed inside the nucleocapsid. Partial (+)DNA is synthesized from the (-)DNA template and generates the relaxed circular DNA (RC-DNA) genome. After budding and infection, the RC-DNA migrates in the nucleus, and is converted into a plasmid-like covalently closed circular DNA (cccDNA). This Cauliflower mosaic virus (strain CM-1841) (CaMV) protein is Enzymatic polyprotein.